Here is a 145-residue protein sequence, read N- to C-terminus: UPF0310 protein PH1033 (145 aa).

Belongs to the UPF0310 family.

This chain is UPF0310 protein PH1033, found in Pyrococcus horikoshii (strain ATCC 700860 / DSM 12428 / JCM 9974 / NBRC 100139 / OT-3).